Here is a 198-residue protein sequence, read N- to C-terminus: Na(+)-translocating NADH-quinone reductase subunit E (198 aa).

The next 6 membrane-spanning stretches (helical) occupy residues Ala11–Val31, Val35–Val55, Phe77–Val97, Gly110–Val130, Ile140–Leu160, and Leu176–Ile196.

This sequence belongs to the NqrDE/RnfAE family. Composed of six subunits; NqrA, NqrB, NqrC, NqrD, NqrE and NqrF.

The protein localises to the cell inner membrane. It catalyses the reaction a ubiquinone + n Na(+)(in) + NADH + H(+) = a ubiquinol + n Na(+)(out) + NAD(+). In terms of biological role, NQR complex catalyzes the reduction of ubiquinone-1 to ubiquinol by two successive reactions, coupled with the transport of Na(+) ions from the cytoplasm to the periplasm. NqrA to NqrE are probably involved in the second step, the conversion of ubisemiquinone to ubiquinol. This chain is Na(+)-translocating NADH-quinone reductase subunit E, found in Haemophilus influenzae (strain ATCC 51907 / DSM 11121 / KW20 / Rd).